We begin with the raw amino-acid sequence, 175 residues long: MKIFSWVQRKLSGKKRVPTSDSSQEPSSPPLSKEVQGLPQDEETFLAIGTLGNNIFPKQEEEEEETDSSKDITPVNTDVTIGKKKSLSFLLKKMFVCTSGFKTPPPLLDLSRGDSLHNTRMEKMLRTILNKKIHPQRSNSIAKKYLESNHKIMDEARSSVDANKWVKTDSECEIF.

The tract at residues 9–39 is disordered; it reads RKLSGKKRVPTSDSSQEPSSPPLSKEVQGLP. An IGT motif motif is present at residues 44 to 50; the sequence is TFLAIGT.

It belongs to the LAZY family. Specifically expressed in roots. Expressed in root tips of young seedlings.

In terms of biological role, involved in the regulation of root gravitropism. Functions redundantly with LAZY2 and LAZY4 in the control of root gravitropism. Functions redundantly with LAZY1, LAZY2 and LAZY4 to control plant architecture by coupling gravity sensing to the formation of auxin gradients. This Arabidopsis thaliana (Mouse-ear cress) protein is Protein LAZY 3.